A 378-amino-acid polypeptide reads, in one-letter code: Chaperone protein DnaJ (378 aa).

The 66-residue stretch at 5 to 70 (DYYEVLSVSR…DKKAAYDQFG (66 aa)) folds into the J domain. The CR-type zinc finger occupies 133-211 (GLTKELRIPT…CHGEGRVEKS (79 aa)). Positions 146, 149, 163, 166, 185, 188, 199, and 202 each coordinate Zn(2+). CXXCXGXG motif repeat units follow at residues 146–153 (CDSCDGSG), 163–170 (CGTCHGQG), 185–192 (CPTCHGRG), and 199–206 (CNKCHGEG).

Belongs to the DnaJ family. Homodimer. Zn(2+) is required as a cofactor.

It localises to the cytoplasm. In terms of biological role, participates actively in the response to hyperosmotic and heat shock by preventing the aggregation of stress-denatured proteins and by disaggregating proteins, also in an autonomous, DnaK-independent fashion. Unfolded proteins bind initially to DnaJ; upon interaction with the DnaJ-bound protein, DnaK hydrolyzes its bound ATP, resulting in the formation of a stable complex. GrpE releases ADP from DnaK; ATP binding to DnaK triggers the release of the substrate protein, thus completing the reaction cycle. Several rounds of ATP-dependent interactions between DnaJ, DnaK and GrpE are required for fully efficient folding. Also involved, together with DnaK and GrpE, in the DNA replication of plasmids through activation of initiation proteins. The protein is Chaperone protein DnaJ of Shewanella sediminis (strain HAW-EB3).